We begin with the raw amino-acid sequence, 331 residues long: D-galactose/methyl-galactoside binding periplasmic protein MglB (331 aa).

The N-terminal stretch at 1–24 is a signal peptide; it reads MKKTAVLSTVAFAIALGSASASFA. Residues D38 and N115 each coordinate beta-D-galactose. Beta-D-glucose is bound by residues D38 and N115. Positions 158, 160, 162, 164, and 166 each coordinate Ca(2+). H176, D178, and R182 together coordinate beta-D-galactose. Beta-D-glucose is bound by residues H176, D178, and R182. Residue E229 participates in Ca(2+) binding. N235, D259, and N279 together coordinate beta-D-galactose. Beta-D-glucose-binding residues include N235, D259, and N279.

It belongs to the bacterial solute-binding protein 2 family. As to quaternary structure, the ABC transporter complex is composed of one ATP-binding protein (MglA), two transmembrane proteins (MglC) and a solute-binding protein (MglB).

The protein resides in the periplasm. Functionally, part of the ABC transporter complex MglABC involved in galactose/methyl galactoside import. The chain is D-galactose/methyl-galactoside binding periplasmic protein MglB (mglB) from Haemophilus influenzae (strain ATCC 51907 / DSM 11121 / KW20 / Rd).